Here is a 761-residue protein sequence, read N- to C-terminus: Ribonucleoside-diphosphate reductase subunit alpha (761 aa).

An ATP-cone domain is found at Leu-5–Gly-95. ATP contacts are provided by residues Lys-9, Glu-15 to Lys-21, Thr-55, and Lys-91. Residue Thr-209 participates in GDP binding. Cys-225 and Cys-462 are disulfide-bonded. DTTP is bound by residues Asp-232–Leu-234, Arg-262, and Arg-269. A GDP-binding site is contributed by Asn-437. Asn-437 (proton acceptor) is an active-site residue. Catalysis depends on Cys-439, which acts as the Cysteine radical intermediate. Residues Glu-441 and Glu-623–Ser-625 each bind GDP. Residue Glu-441 is the Proton acceptor of the active site.

This sequence belongs to the ribonucleoside diphosphate reductase large chain family. As to quaternary structure, tetramer of two alpha and two beta subunits.

The enzyme catalyses a 2'-deoxyribonucleoside 5'-diphosphate + [thioredoxin]-disulfide + H2O = a ribonucleoside 5'-diphosphate + [thioredoxin]-dithiol. Its activity is regulated as follows. Under complex allosteric control mediated by deoxynucleoside triphosphates and ATP binding to separate specificity and activation sites on the alpha subunit. The type of nucleotide bound at the specificity site determines substrate preference. It seems probable that ATP makes the enzyme reduce CDP and UDP, dGTP favors ADP reduction and dTTP favors GDP reduction. Stimulated by ATP and inhibited by dATP binding to the activity site. Its function is as follows. Provides the precursors necessary for DNA synthesis. Catalyzes the biosynthesis of deoxyribonucleotides from the corresponding ribonucleotides. The chain is Ribonucleoside-diphosphate reductase subunit alpha (nrdA) from Buchnera aphidicola subsp. Acyrthosiphon pisum (strain APS) (Acyrthosiphon pisum symbiotic bacterium).